The sequence spans 398 residues: DNA-directed RNA polymerase III subunit RPC4 (398 aa).

Positions 1–105 are disordered; that stretch reads MSEGNAAGEP…GRGRPEVIQS (105 aa). Position 2 is an N-acetylserine (Ser-2). Ser-42 carries the phosphoserine modification. The segment covering 66–100 has biased composition (basic and acidic residues); it reads KIKEEPKEEVTVKKEKRERDRDRQRDSHGRGRGRP. Glycyl lysine isopeptide (Lys-Gly) (interchain with G-Cter in SUMO2) cross-links involve residues Lys-68 and Lys-78. Residues Arg-95, Arg-97, and Arg-99 each carry the omega-N-methylarginine modification. Residues Lys-141, Lys-152, Lys-160, Lys-190, Lys-199, Lys-206, Lys-220, Lys-285, and Lys-302 each participate in a glycyl lysine isopeptide (Lys-Gly) (interchain with G-Cter in SUMO2) cross-link.

This sequence belongs to the eukaryotic RPC4/POLR3D RNA polymerase subunit family. In terms of assembly, component of the RNA polymerase III complex consisting of 17 subunits: a ten-subunit horseshoe-shaped catalytic core composed of POLR3A/RPC1, POLR3B/RPC2, POLR1C/RPAC1, POLR1D/RPAC2, POLR3K/RPC10, POLR2E/RPABC1, POLR2F/RPABC2, POLR2H/RPABC3, POLR2K/RPABC4 and POLR2L/RPABC5; a mobile stalk composed of two subunits POLR3H/RPC8 and CRCP/RPC9, protruding from the core and functioning primarily in transcription initiation; and additional subunits homologous to general transcription factors of the RNA polymerase II machinery, POLR3C/RPC3-POLR3F/RPC6-POLR3G/RPC7 heterotrimer required for transcription initiation and POLR3D/RPC4-POLR3E/RPC5 heterodimer involved in both transcription initiation and termination. Post-translationally, sumoylation on Lys-141 can serve as a signal to mark misfolded Pol III for proteasomal degradation.

Its subcellular location is the nucleus. In terms of biological role, DNA-dependent RNA polymerase catalyzes the transcription of DNA into RNA using the four ribonucleoside triphosphates as substrates. Specific peripheric component of RNA polymerase III (Pol III) which synthesizes small non-coding RNAs including 5S rRNA, snRNAs, tRNAs and miRNAs from at least 500 distinct genomic loci. Enables recruitment of Pol III at transcription initiation site and drives transcription initiation from both type 2 and type 3 DNA promoters. Required for efficient transcription termination and reinitiation. Pol III plays a key role in sensing and limiting infection by intracellular bacteria and DNA viruses. Acts as nuclear and cytosolic DNA sensor involved in innate immune response. Can sense non-self dsDNA that serves as template for transcription into dsRNA. The non-self RNA polymerase III transcripts, such as Epstein-Barr virus-encoded RNAs (EBERs) induce type I interferon and NF-kappa-B through the RIG-I pathway. This Bos taurus (Bovine) protein is DNA-directed RNA polymerase III subunit RPC4 (POLR3D).